The chain runs to 87 residues: Exendin-4 (87 aa).

Residues 1-23 form the signal peptide; it reads MKIILWLCVFGLFLATLFPISWQ. Positions 24 to 45 are excised as a propeptide; that stretch reads MPVESGLSSEDSASSESFASKI. A Serine amide modification is found at Ser-86.

The protein belongs to the glucagon family. Expressed by the venom gland.

The protein resides in the secreted. Functionally, venom protein that mimics the incretin hormone glucagon-like peptide 1 (GLP-1). It stimulates insulin synthesis and secretion, protects against beta-cell apoptosis in response to different insults, and promotes beta-cell proliferation It also promotes satiety, reduces food intake, reduces fat deposition, reduces body weight and inhibits gastric emptying. Interacts with GLP-1 receptor (GLP1R). Induces hypotension that is mediated by relaxation of cardiac smooth muscle. This is Exendin-4 from Heloderma suspectum cinctum (Banded Gila monster).